A 183-amino-acid chain; its full sequence is Large ribosomal subunit protein uL5 (183 aa).

The protein belongs to the universal ribosomal protein uL5 family. In terms of assembly, part of the 50S ribosomal subunit; part of the 5S rRNA/L5/L18/L25 subcomplex. Contacts the 5S rRNA and the P site tRNA. Forms a bridge to the 30S subunit in the 70S ribosome.

Functionally, this is one of the proteins that bind and probably mediate the attachment of the 5S RNA into the large ribosomal subunit, where it forms part of the central protuberance. In the 70S ribosome it contacts protein S13 of the 30S subunit (bridge B1b), connecting the 2 subunits; this bridge is implicated in subunit movement. Contacts the P site tRNA; the 5S rRNA and some of its associated proteins might help stabilize positioning of ribosome-bound tRNAs. In Pseudothermotoga lettingae (strain ATCC BAA-301 / DSM 14385 / NBRC 107922 / TMO) (Thermotoga lettingae), this protein is Large ribosomal subunit protein uL5.